We begin with the raw amino-acid sequence, 590 residues long: L-fucose isomerase (590 aa).

Residues Glu337 and Asp361 each act as proton acceptor in the active site. Mn(2+)-binding residues include Glu337, Asp361, and His528.

The protein belongs to the L-fucose isomerase family. Mn(2+) is required as a cofactor.

It is found in the cytoplasm. The catalysed reaction is L-fucose = L-fuculose. The protein operates within carbohydrate degradation; L-fucose degradation; L-lactaldehyde and glycerone phosphate from L-fucose: step 1/3. Functionally, converts the aldose L-fucose into the corresponding ketose L-fuculose. The chain is L-fucose isomerase from Bacteroides fragilis (strain YCH46).